A 197-amino-acid chain; its full sequence is Rac-like GTP-binding protein 5 (197 aa).

13 to 20 (GDGAVGKT) is a binding site for GTP. The short motif at 35–43 (YVPTVFDNF) is the Effector region element. Residues 60 to 64 (DTAGQ) and 118 to 121 (TKLD) contribute to the GTP site. The residue at position 194 (Cys194) is a Cysteine methyl ester. Residue Cys194 is the site of S-geranylgeranyl cysteine attachment. Positions 195–197 (AIL) are cleaved as a propeptide — removed in mature form.

This sequence belongs to the small GTPase superfamily. Rho family.

Its subcellular location is the cytoplasm. The protein localises to the membrane. Functionally, inactive GDP-bound Rho GTPases reside in the cytosol, are found in a complex with Rho GDP-dissociation inhibitors (Rho GDIs), and are released from the GDI protein in order to translocate to membranes upon activation. The protein is Rac-like GTP-binding protein 5 (RAC5) of Oryza sativa subsp. japonica (Rice).